Consider the following 344-residue polypeptide: Arylacetonitrilase (344 aa).

In terms of domain architecture, CN hydrolase spans 5–290 (LRVAVTQAEP…EGIVYADLDL (286 aa)). Glu45 serves as the catalytic Proton acceptor. The active site involves Lys126. The Nucleophile role is filled by Cys167. Positions 324 to 344 (VIPRDEEEPSRKANVVVPKQE) are disordered.

The protein belongs to the carbon-nitrogen hydrolase superfamily. Nitrilase family.

It carries out the reaction a nitrile + 2 H2O = a carboxylate + NH4(+). The catalysed reaction is 4-chlorophenylacetonitrile + 2 H2O = 4-chlorophenylacetate + NH4(+). Nitrilase that hydrolyzes preferentially phenylacetonitrile and (R,S)-mandelonitrile. Also acts on dinitriles like phenylenediacetonitriles (PDAs) 1,2-PDA, 1,3-PDA, and 1,4-PDA, and cyanophenyl acetonitriles (CPAs) 2-CPA and 4-CPA. This chain is Arylacetonitrilase, found in Macrophomina phaseolina (strain MS6) (Charcoal rot fungus).